Reading from the N-terminus, the 182-residue chain is MTFEQLIPLIIMAFALGMDAFSVSLGMGMMTLKIRQILYIGVTIGIFHIIMPFIGMVLGRFLSEQYGDIAHFAGAILLIGLGFYIVYSSILENEETRTAPIGISLFVFAFGVSIDSFSVGLSLGIYGAQTVITILLFGFISMLLAWTGLFIGRHAKGMLGTYGEIVGGIILVGFGLYLLFPI.

6 helical membrane passes run 6 to 26 (LIPLIIMAFALGMDAFSVSLG), 37 to 57 (ILYIGVTIGIFHIIMPFIGMV), 71 to 91 (HFAGAILLIGLGFYIVYSSIL), 101 to 121 (IGISLFVFAFGVSIDSFSVGL), 131 to 151 (VITILLFGFISMLLAWTGLFI), and 162 to 182 (YGEIVGGIILVGFGLYLLFPI).

This sequence belongs to the MntP (TC 9.B.29) family.

The protein resides in the cell membrane. In terms of biological role, probably functions as a manganese efflux pump. This chain is Putative manganese efflux pump MntP, found in Bacillus cereus (strain AH187).